Here is a 455-residue protein sequence, read N- to C-terminus: Ectonucleoside triphosphate diphosphohydrolase 6 (455 aa).

At 1–12 (MRKIPNHGTLRM) the chain is on the cytoplasmic side. The helical transmembrane segment at 13-32 (TKVAYPLGLCVGLFIYVAYI) threads the bilayer. Over 33–455 (KWHRASAAQA…SLKRQKVPAL (423 aa)) the chain is Lumenal. The active-site Proton acceptor is the Glu196. Disulfide bonds link Cys297–Cys327 and Cys387–Cys401.

It belongs to the GDA1/CD39 NTPase family. Requires Mg(2+) as cofactor. Ca(2+) serves as cofactor. N-glycosylated.

The protein localises to the golgi apparatus membrane. It is found in the secreted. Its subcellular location is the cell membrane. The catalysed reaction is a ribonucleoside 5'-diphosphate + H2O = a ribonucleoside 5'-phosphate + phosphate + H(+). It carries out the reaction IDP + H2O = IMP + phosphate + H(+). The enzyme catalyses GDP + H2O = GMP + phosphate + H(+). It catalyses the reaction UDP + H2O = UMP + phosphate + H(+). Functionally, catalyzes the hydrolysis of nucleoside triphosphates and diphosphates in a calcium- or magnesium-dependent manner. Has a strong preference for nucleoside diphosphates, preferentially hydrolyzes GDP, IDP, and UDP, with slower hydrolysis of CDP, ITP, GTP, CTP, ADP, and UTP and virtually no hydrolysis of ATP. The membrane bound form might support glycosylation reactions in the Golgi apparatus and, when released from cells, might catalyze the hydrolysis of extracellular nucleotides. This is Ectonucleoside triphosphate diphosphohydrolase 6 from Mus musculus (Mouse).